Reading from the N-terminus, the 155-residue chain is UPF0305 protein MTH_811 (155 aa).

Belongs to the UPF0305 family.

This Methanothermobacter thermautotrophicus (strain ATCC 29096 / DSM 1053 / JCM 10044 / NBRC 100330 / Delta H) (Methanobacterium thermoautotrophicum) protein is UPF0305 protein MTH_811.